The sequence spans 306 residues: Homoserine kinase (306 aa).

90–100 (PLARGLGSSAS) contributes to the ATP binding site.

The protein belongs to the GHMP kinase family. Homoserine kinase subfamily.

It localises to the cytoplasm. It carries out the reaction L-homoserine + ATP = O-phospho-L-homoserine + ADP + H(+). Its pathway is amino-acid biosynthesis; L-threonine biosynthesis; L-threonine from L-aspartate: step 4/5. In terms of biological role, catalyzes the ATP-dependent phosphorylation of L-homoserine to L-homoserine phosphate. This Staphylococcus epidermidis (strain ATCC 12228 / FDA PCI 1200) protein is Homoserine kinase.